The chain runs to 313 residues: Spermatid maturation protein 1 (313 aa).

A helical membrane pass occupies residues 29 to 49 (ILLLLGLIICINIGINMVTLL). 4 disordered regions span residues 71-90 (KLRSPGKQTQPSKHSSPAVH), 97-151 (AVKM…HNWD), 243-263 (EPPILGPANVPDIPRRRSSGR), and 291-313 (LASGSSTAEGTRKDWVYRSMTER). Residues 76 to 85 (GKQTQPSKHS) are compositionally biased toward polar residues. The span at 107–122 (TRRRHRRGSSSRRARR) shows a compositional bias: basic residues. Positions 263-289 (RVTYDARDVRRRLRELTREVEALSHCY) form a coiled coil. The span at 300-313 (GTRKDWVYRSMTER) shows a compositional bias: basic and acidic residues.

It is found in the membrane. Its subcellular location is the cytoplasm. In terms of biological role, required for proper cytoplasm removal during spermatogenesis. The polypeptide is Spermatid maturation protein 1 (SPEM1) (Bos taurus (Bovine)).